The primary structure comprises 504 residues: Glycerol kinase (504 aa).

T14 serves as a coordination point for ADP. ATP contacts are provided by T14, T15, and S16. Residue T14 participates in sn-glycerol 3-phosphate binding. Residue R18 participates in ADP binding. Sn-glycerol 3-phosphate-binding residues include R84, E85, and Y136. The glycerol site is built by R84, E85, and Y136. H232 is subject to Phosphohistidine; by HPr. D246 contributes to the sn-glycerol 3-phosphate binding site. Positions 246 and 247 each coordinate glycerol. Residues T268 and G311 each coordinate ADP. T268, G311, Q315, and G412 together coordinate ATP. 2 residues coordinate ADP: G412 and N416.

It belongs to the FGGY kinase family. Homotetramer and homodimer (in equilibrium). Post-translationally, the phosphoenolpyruvate-dependent sugar phosphotransferase system (PTS), including enzyme I, and histidine-containing protein (HPr) are required for the phosphorylation, which leads to the activation of the enzyme.

It carries out the reaction glycerol + ATP = sn-glycerol 3-phosphate + ADP + H(+). Its pathway is polyol metabolism; glycerol degradation via glycerol kinase pathway; sn-glycerol 3-phosphate from glycerol: step 1/1. Activated by phosphorylation and inhibited by fructose 1,6-bisphosphate (FBP). Its function is as follows. Key enzyme in the regulation of glycerol uptake and metabolism. Catalyzes the phosphorylation of glycerol to yield sn-glycerol 3-phosphate. In Streptococcus pyogenes serotype M6 (strain ATCC BAA-946 / MGAS10394), this protein is Glycerol kinase.